The primary structure comprises 70 residues: DNA-directed RNA polymerase subunit epsilon (70 aa).

Belongs to the RNA polymerase subunit epsilon family. In terms of assembly, RNAP is composed of a core of 2 alpha, a beta and a beta' subunit. The core is associated with a delta subunit, and at least one of epsilon or omega. When a sigma factor is associated with the core the holoenzyme is formed, which can initiate transcription.

It catalyses the reaction RNA(n) + a ribonucleoside 5'-triphosphate = RNA(n+1) + diphosphate. Functionally, a non-essential component of RNA polymerase (RNAP). This Bacillus cereus (strain Q1) protein is DNA-directed RNA polymerase subunit epsilon.